We begin with the raw amino-acid sequence, 337 residues long: MTLGIGVIGTGAIGQDHIRRVSRALSGGRIVALNDINADNARRAAQEWAPDAVICDTARDLVARPDVQAVMVTSWGGTHAEYVLDAIAAGKPVFCEKPLATNAADCLRIMEAEMARGRRLVQVGFNRRYDSGYLDLKAILDNGTIGDVLMVHAMHRNQRVGPNYKTEMAITDTLVHELDVHRWLLDGEYVSAQVIFPRRTSKALPHMRDPQIALLETKRGIRIDVEIFVNCQYGYDIQCAVVGELGQANLPDPPAVPVKTGETLSRHIMNDWKYRFIDAYDAEIQDFIDRASTGSPAGPDSWAGYAASVAADACVRAQESGRIEPIEMIAKPAFYSR.

It belongs to the Gfo/Idh/MocA family. Homotetramer.

The enzyme catalyses myo-inositol + NAD(+) = scyllo-inosose + NADH + H(+). In terms of biological role, involved in the oxidation of myo-inositol (MI) to 2-keto-myo-inositol (2KMI or 2-inosose). This is Inositol 2-dehydrogenase from Gluconacetobacter diazotrophicus (strain ATCC 49037 / DSM 5601 / CCUG 37298 / CIP 103539 / LMG 7603 / PAl5).